The chain runs to 265 residues: Thioredoxin-related transmembrane protein 2 homolog (265 aa).

The first 32 residues, 1–32, serve as a signal peptide directing secretion; sequence MLIPRLDEVRRALTAFHFFNTLLALAFPVIRS. Topologically, residues 33 to 96 are extracellular; the sequence is TSLCDYVFAV…KIAGMFLFIR (64 aa). Residues 97-117 form a helical membrane-spanning segment; it reads ADILPGIIYILACLIVTVLFP. Residues 118–265 lie on the Cytoplasmic side of the membrane; sequence EPVYNGPEQV…KKGAKAKKED (148 aa). In terms of domain architecture, Thioredoxin spans 126–230; it reads QVTYFQGEQL…RPLVNDSRRA (105 aa). A Di-lysine motif motif is present at residues 262 to 265; that stretch reads KKED.

The protein localises to the membrane. This is Thioredoxin-related transmembrane protein 2 homolog from Caenorhabditis elegans.